The following is a 228-amino-acid chain: 7-cyano-7-deazaguanine synthase (228 aa).

Position 13–23 (13–23 (LSGGMDSTLSS)) interacts with ATP. C192, C200, C203, and C206 together coordinate Zn(2+).

This sequence belongs to the QueC family. It depends on Zn(2+) as a cofactor.

The enzyme catalyses 7-carboxy-7-deazaguanine + NH4(+) + ATP = 7-cyano-7-deazaguanine + ADP + phosphate + H2O + H(+). It functions in the pathway purine metabolism; 7-cyano-7-deazaguanine biosynthesis. In terms of biological role, catalyzes the ATP-dependent conversion of 7-carboxy-7-deazaguanine (CDG) to 7-cyano-7-deazaguanine (preQ(0)). This is 7-cyano-7-deazaguanine synthase from Aliarcobacter butzleri (strain RM4018) (Arcobacter butzleri).